We begin with the raw amino-acid sequence, 275 residues long: Large ribosomal subunit protein uL2 (275 aa).

Positions Val223 to Lys275 are disordered.

It belongs to the universal ribosomal protein uL2 family. In terms of assembly, part of the 50S ribosomal subunit. Forms a bridge to the 30S subunit in the 70S ribosome.

One of the primary rRNA binding proteins. Required for association of the 30S and 50S subunits to form the 70S ribosome, for tRNA binding and peptide bond formation. It has been suggested to have peptidyltransferase activity; this is somewhat controversial. Makes several contacts with the 16S rRNA in the 70S ribosome. In Shewanella halifaxensis (strain HAW-EB4), this protein is Large ribosomal subunit protein uL2.